A 2122-amino-acid polypeptide reads, in one-letter code: Unique GC organizer UGO (2122 aa).

5 consecutive transmembrane segments (helical) span residues 19–39 (FAVAVALLDLALYVLIGTNSL), 50–70 (LFGMITSALIFIIALCGFVIV), 82–102 (TYIMPVLIICNIASVFYMQLI), 115–135 (VLTFLITGYPYVWLVAFVLIG), and 145–165 (VVCSVSLGSSCPPSVWVDVGL). Disordered regions lie at residues 337–403 (AALH…HRSA), 422–532 (FRGL…GPFV), 565–591 (DLRESRERTARAASHDTHAAADDSGLQ), 627–762 (HRRG…GRAN), 785–815 (HAASSEEERPVRPARHSWRRGSGDSRECSAS), 848–870 (MSRRRRREGKSRPHASSVSRAER), 903–949 (SKEG…ASAN), 999–1046 (RNET…LHSR), 1068–1308 (PSDL…HEAV), 1328–1368 (AGLS…SEEE), 1515–1540 (ANSSTAVSSSLPDSTAWQGSGAAASA), 1560–1608 (AAEH…TPHT), and 1639–1727 (QGLG…TFFG). The segment covering 363–374 (RSNTLRGCSGQV) has biased composition (polar residues). 3 stretches are compositionally biased toward basic and acidic residues: residues 503–525 (LRMDEQSGDADKASSDVSRDPAK), 565–585 (DLRESRERTARAASHDTHAAA), and 632–645 (GARDGELVFERGEP). The segment covering 672-687 (RLSRSRRHKTRTYRRG) has biased composition (basic residues). Residues 690-699 (SDGTTAGTSD) show a composition bias toward low complexity. Positions 707 to 720 (LEDEGSDSGQESES) are enriched in acidic residues. The segment covering 725-735 (RRRMRSSRNRR) has biased composition (basic residues). Low complexity predominate over residues 741–750 (EDSSSGTSVR). Residues 751 to 760 (SEGRHCREGR) show a composition bias toward basic and acidic residues. N-linked (GlcNAc...) asparagine glycosylation occurs at N762. Basic residues predominate over residues 848-860 (MSRRRRREGKSRP). Polar residues-rich tracts occupy residues 999–1011 (RNETEMTASSPAT) and 1072–1097 (SLFTTPPASPSSLNEVQASRSSSARI). The N-linked (GlcNAc...) asparagine glycan is linked to N1000. N-linked (GlcNAc...) asparagine glycosylation is present at N1165. Basic and acidic residues predominate over residues 1220–1261 (SREDLVGEADSHVSPEKEVFVSSRREKREEQVPRSRREERRD). The segment covering 1262–1276 (RRGRRWRRGRRRRKA) has biased composition (basic residues). Basic and acidic residues-rich tracts occupy residues 1277-1289 (RECSETEERRDSS) and 1345-1359 (GDMRERQIYETHSDG). A compositionally biased stretch (polar residues) spans 1515–1527 (ANSSTAVSSSLPD). N-linked (GlcNAc...) asparagine glycosylation occurs at N1516. 2 stretches are compositionally biased toward low complexity: residues 1528–1540 (STAWQGSGAAASA) and 1597–1608 (TQTPQTPQTPHT). Residues 1684 to 1693 (LSATPSTRLQ) show a composition bias toward polar residues. The next 5 membrane-spanning stretches (helical) occupy residues 1859 to 1879 (VAWLLFLICFYATAFHGLLRL), 1956 to 1976 (MLALSFLQFVYAVFDNTWHLI), 1989 to 2009 (IIPASPSLEIAAVQTVYILAV), 2017 to 2037 (IFLLYIITYIIIFFVALPPGV), and 2040 to 2060 (VQLFTISMAGWLFTCVGGQLF). The disordered stretch occupies residues 2102 to 2122 (DEGSEDEVSMGSGHLVGDRSA).

In terms of assembly, interacts with guanylate cyclase GC; the interaction regulates guanylate cyclase GC trafficking and catalytic activity.

The protein localises to the cell membrane. In tachyzoites, required for the cellular trafficking of guanylate cyclase GC to the cell membrane and for GC guanylate cyclase activity. This Toxoplasma gondii (strain ATCC 50853 / GT1) protein is Unique GC organizer UGO.